Consider the following 120-residue polypeptide: Small ribosomal subunit protein uS13 (120 aa).

The disordered stretch occupies residues Pro-97–Lys-120.

Belongs to the universal ribosomal protein uS13 family. In terms of assembly, part of the 30S ribosomal subunit. Forms a loose heterodimer with protein S19. Forms two bridges to the 50S subunit in the 70S ribosome.

In terms of biological role, located at the top of the head of the 30S subunit, it contacts several helices of the 16S rRNA. In the 70S ribosome it contacts the 23S rRNA (bridge B1a) and protein L5 of the 50S subunit (bridge B1b), connecting the 2 subunits; these bridges are implicated in subunit movement. Contacts the tRNAs in the A and P-sites. This is Small ribosomal subunit protein uS13 from Nitratiruptor sp. (strain SB155-2).